A 357-amino-acid chain; its full sequence is Holliday junction branch migration complex subunit RuvB (357 aa).

Residues 1–15 are compositionally biased toward low complexity; sequence MAIQSDSLSSLPDSP. Residues 1 to 30 form a disordered region; it reads MAIQSDSLSSLPDSPRIVAPQPVSPNEESI. A large ATPase domain (RuvB-L) region spans residues 13 to 195; sequence DSPRIVAPQP…FGIVSRLEFY (183 aa). ATP is bound by residues Leu-34, Arg-35, Gly-76, Lys-79, Thr-80, Thr-81, 142-144, Arg-185, Tyr-195, and Arg-232; that span reads EDF. Thr-80 contacts Mg(2+). Residues 196 to 266 are small ATPAse domain (RuvB-S); that stretch reads NTDELARIVT…AAGRALAMLD (71 aa). Positions 269–357 are head domain (RuvB-H); sequence PQGLDVMDRK…SGGTGELFSK (89 aa). The DNA site is built by Arg-305, Arg-324, and Arg-329.

Belongs to the RuvB family. As to quaternary structure, homohexamer. Forms an RuvA(8)-RuvB(12)-Holliday junction (HJ) complex. HJ DNA is sandwiched between 2 RuvA tetramers; dsDNA enters through RuvA and exits via RuvB. An RuvB hexamer assembles on each DNA strand where it exits the tetramer. Each RuvB hexamer is contacted by two RuvA subunits (via domain III) on 2 adjacent RuvB subunits; this complex drives branch migration. In the full resolvosome a probable DNA-RuvA(4)-RuvB(12)-RuvC(2) complex forms which resolves the HJ.

It localises to the cytoplasm. It carries out the reaction ATP + H2O = ADP + phosphate + H(+). Functionally, the RuvA-RuvB-RuvC complex processes Holliday junction (HJ) DNA during genetic recombination and DNA repair, while the RuvA-RuvB complex plays an important role in the rescue of blocked DNA replication forks via replication fork reversal (RFR). RuvA specifically binds to HJ cruciform DNA, conferring on it an open structure. The RuvB hexamer acts as an ATP-dependent pump, pulling dsDNA into and through the RuvAB complex. RuvB forms 2 homohexamers on either side of HJ DNA bound by 1 or 2 RuvA tetramers; 4 subunits per hexamer contact DNA at a time. Coordinated motions by a converter formed by DNA-disengaged RuvB subunits stimulates ATP hydrolysis and nucleotide exchange. Immobilization of the converter enables RuvB to convert the ATP-contained energy into a lever motion, pulling 2 nucleotides of DNA out of the RuvA tetramer per ATP hydrolyzed, thus driving DNA branch migration. The RuvB motors rotate together with the DNA substrate, which together with the progressing nucleotide cycle form the mechanistic basis for DNA recombination by continuous HJ branch migration. Branch migration allows RuvC to scan DNA until it finds its consensus sequence, where it cleaves and resolves cruciform DNA. This Bordetella parapertussis (strain 12822 / ATCC BAA-587 / NCTC 13253) protein is Holliday junction branch migration complex subunit RuvB.